The primary structure comprises 502 residues: MPLVVRFPDVLKNRLETLQSAFDMAINSQGYEAHYQGVYPVKCNQDRFVVEDIVKFGSPYRFGLEAGSKPELLLAMNCLSKGSADALLVCNGFKDTEYISLALVARKLLLNSVIVLEQEEELDLVIDISRKMSVRPVIGLRAKLRTKHSGHFGSTSGEKGKFGLTTTQILRVVKKLDESGMLDCLQLLHFHIGSQIPTTELLADGVGEATQIYSELVRLGAGMKFIDIGGGLGIDYDGSKSSNSDVSVCYSIEEYASAVVQAVLYVCDRKGGKHPVICSESGRAIVSHHSILIFEAVSASTSHVSTQPSSGGLQSLVETLNEDARADYRNLSAAAVRGEYDTCLIYSDQLKQRCVEQFKDGSLDIEQLAAVDSICDWVSKAIGVADPVRTYHVNLSVFTSIPDFWGFSQLFPIVPIHRLDEKPTMRGILSDLTCDSDGKVDKFIGGESSLPLHEIGSGDGGRYYLGMFLGGAYEEALGGLHNLFGGPSVVRVMQSDSPHSFA.

N6-(pyridoxal phosphate)lysine is present on lysine 42. 226–236 (IDIGGGLGIDY) lines the substrate pocket.

This sequence belongs to the Orn/Lys/Arg decarboxylase class-II family. SpeA subfamily. Pyridoxal 5'-phosphate serves as cofactor. Mg(2+) is required as a cofactor.

The catalysed reaction is L-arginine + H(+) = agmatine + CO2. It participates in amine and polyamine biosynthesis; agmatine biosynthesis; agmatine from L-arginine: step 1/1. This is Arginine decarboxylase from Solanum lycopersicum (Tomato).